A 75-amino-acid chain; its full sequence is uncharacterized protein (75 aa).

The segment at 1-23 is disordered; it reads MADAMDLAQLREQEDRERHISNA. Over residues 9–20 the composition is skewed to basic and acidic residues; that stretch reads QLREQEDRERHI. The dksA C4-type zinc-finger motif lies at 35-59; that stretch reads CEECDAPIPEARRRAIPGVQCCVTC.

This is an uncharacterized protein from Escherichia phage 186 (Bacteriophage 186).